A 166-amino-acid polypeptide reads, in one-letter code: Large ribosomal subunit protein bL19 (166 aa).

Belongs to the bacterial ribosomal protein bL19 family.

This protein is located at the 30S-50S ribosomal subunit interface and may play a role in the structure and function of the aminoacyl-tRNA binding site. The chain is Large ribosomal subunit protein bL19 from Chelativorans sp. (strain BNC1).